The sequence spans 473 residues: Photosystem II CP43 reaction center protein (473 aa).

A propeptide spanning residues 1 to 14 (MKTLYSLRRFYPVE) is cleaved from the precursor. The residue at position 15 (Thr-15) is an N-acetylthreonine. At Thr-15 the chain carries Phosphothreonine. 5 helical membrane-spanning segments follow: residues 69–93 (LFEVAHFVPEKPMYEQGLILLPHLA), 134–155 (LLGPETLEESFPFFGYVWKDRN), 178–200 (KALYFGGVYDTWAPGGGDVRKIT), 255–275 (KPFAWARRALVWSGEAYLSYS), and 291–312 (WFNNTAYPSEFYGPTGPEASQA). A [CaMn4O5] cluster-binding site is contributed by Glu-367. Residues 447–471 (RARAAAAGFEKGIDRDFEPVLSMTP) form a helical membrane-spanning segment.

This sequence belongs to the PsbB/PsbC family. PsbC subfamily. As to quaternary structure, PSII is composed of 1 copy each of membrane proteins PsbA, PsbB, PsbC, PsbD, PsbE, PsbF, PsbH, PsbI, PsbJ, PsbK, PsbL, PsbM, PsbT, PsbX, PsbY, PsbZ, Psb30/Ycf12, at least 3 peripheral proteins of the oxygen-evolving complex and a large number of cofactors. It forms dimeric complexes. It depends on Binds multiple chlorophylls and provides some of the ligands for the Ca-4Mn-5O cluster of the oxygen-evolving complex. It may also provide a ligand for a Cl- that is required for oxygen evolution. PSII binds additional chlorophylls, carotenoids and specific lipids. as a cofactor.

The protein resides in the plastid. It is found in the chloroplast thylakoid membrane. Its function is as follows. One of the components of the core complex of photosystem II (PSII). It binds chlorophyll and helps catalyze the primary light-induced photochemical processes of PSII. PSII is a light-driven water:plastoquinone oxidoreductase, using light energy to abstract electrons from H(2)O, generating O(2) and a proton gradient subsequently used for ATP formation. This chain is Photosystem II CP43 reaction center protein, found in Panax ginseng (Korean ginseng).